The following is a 363-amino-acid chain: Ribosomal RNA large subunit methyltransferase M (363 aa).

S-adenosyl-L-methionine is bound by residues Ser194, 227 to 230 (CPGG), Asp246, Asp266, and Asp284. Residue Lys313 is the Proton acceptor of the active site.

This sequence belongs to the class I-like SAM-binding methyltransferase superfamily. RNA methyltransferase RlmE family. RlmM subfamily. Monomer.

The protein localises to the cytoplasm. The catalysed reaction is cytidine(2498) in 23S rRNA + S-adenosyl-L-methionine = 2'-O-methylcytidine(2498) in 23S rRNA + S-adenosyl-L-homocysteine + H(+). Functionally, catalyzes the 2'-O-methylation at nucleotide C2498 in 23S rRNA. This chain is Ribosomal RNA large subunit methyltransferase M, found in Mannheimia succiniciproducens (strain KCTC 0769BP / MBEL55E).